A 361-amino-acid polypeptide reads, in one-letter code: Beta-hexosaminidase (361 aa).

Substrate is bound by residues aspartate 69, arginine 77, arginine 144, and 174-175; that span reads KH. Residue histidine 187 is the Proton donor/acceptor of the active site. The active-site Nucleophile is the aspartate 258.

Belongs to the glycosyl hydrolase 3 family. NagZ subfamily.

The protein resides in the cytoplasm. It catalyses the reaction Hydrolysis of terminal non-reducing N-acetyl-D-hexosamine residues in N-acetyl-beta-D-hexosaminides.. Its pathway is cell wall biogenesis; peptidoglycan recycling. Functionally, plays a role in peptidoglycan recycling by cleaving the terminal beta-1,4-linked N-acetylglucosamine (GlcNAc) from peptide-linked peptidoglycan fragments, giving rise to free GlcNAc, anhydro-N-acetylmuramic acid and anhydro-N-acetylmuramic acid-linked peptides. This chain is Beta-hexosaminidase, found in Neisseria meningitidis serogroup B (strain ATCC BAA-335 / MC58).